The primary structure comprises 315 residues: Cytochrome f (315 aa).

A signal peptide spans 1-30 (MRTFLKFSTLVSKGVLVLVCSFFLTASSNA). Heme-binding residues include Y31, C51, C54, and H55. Residues 281 to 300 (IQGLLVFFLFVLLAQVFLVL) traverse the membrane as a helical segment.

Belongs to the cytochrome f family. As to quaternary structure, the 4 large subunits of the cytochrome b6-f complex are cytochrome b6, subunit IV (17 kDa polypeptide, petD), cytochrome f and the Rieske protein, while the 4 small subunits are PetG, PetL, PetM and PetN. The complex functions as a dimer. The cofactor is heme.

It localises to the plastid. It is found in the chloroplast thylakoid membrane. Component of the cytochrome b6-f complex, which mediates electron transfer between photosystem II (PSII) and photosystem I (PSI), cyclic electron flow around PSI, and state transitions. The polypeptide is Cytochrome f (petA) (Chlorella vulgaris (Green alga)).